We begin with the raw amino-acid sequence, 476 residues long: 4-(hydroxymethyl)benzenesulfonate dehydrogenase TsaD1 (476 aa).

Residues Trp-154 to Asn-155, Lys-178 to Glu-181, and Gly-230 to Ser-231 contribute to the NAD(+) site. Catalysis depends on Glu-252, which acts as the Proton acceptor. Leu-253 provides a ligand contact to NAD(+). Residue Cys-286 is the Nucleophile of the active site. Glu-380 is an NAD(+) binding site.

The protein belongs to the aldehyde dehydrogenase family. In terms of assembly, homodimer.

It carries out the reaction 4-(hydroxymethyl)benzenesulfonate + NAD(+) = 4-formylbenzenesulfonate + NADH + H(+). In terms of biological role, involved in the toluene-4-sulfonate degradation pathway. Does not discriminate between the sulfonate and the carboxyl substituents and can also be involved in the p-toluenecarboxylate degradation pathway. In Comamonas testosteroni (Pseudomonas testosteroni), this protein is 4-(hydroxymethyl)benzenesulfonate dehydrogenase TsaD1 (tsaD1).